Reading from the N-terminus, the 263-residue chain is Methylesterase 2 (263 aa).

Ser-85 acts as the Acyl-ester intermediate in catalysis. Residues Asp-213 and His-241 each act as charge relay system in the active site.

The protein belongs to the AB hydrolase superfamily. Methylesterase family.

It carries out the reaction methyl (indol-3-yl)acetate + H2O = (indol-3-yl)acetate + methanol + H(+). The enzyme catalyses methyl (-)-jasmonate + H2O = jasmonate + methanol + H(+). The catalysed reaction is methyl salicylate + H2O = salicylate + methanol + H(+). It functions in the pathway plant hormone biosynthesis. It participates in lipid metabolism; oxylipin biosynthesis. Its activity is regulated as follows. Esterase activity is down-regulated by salicylic acid (SA). Down-regulated by agrochemicals Paraoxon, 3,4-DCl and Profenofos. Its function is as follows. Methylesterase shown to have carboxylesterase activity, methyl indole-3-acetic acid (MeIAA) esterase activity, methyl salicylate (MeSA) esterase activity and methyl jasmonate (MeJA) esterase activity in vitro. This chain is Methylesterase 2, found in Arabidopsis thaliana (Mouse-ear cress).